The chain runs to 163 residues: Phospholipase A2 homolog 3 (163 aa).

Residues 1–43 (MARGGSFSRLRLRAGVVVAAAAAALLLFAVVAPPAAALNIGLQ) form the signal peptide. 6 cysteine pairs are disulfide-bonded: cysteine 55-cysteine 83, cysteine 59-cysteine 89, cysteine 64-cysteine 137, cysteine 76-cysteine 96, cysteine 95-cysteine 121, and cysteine 102-cysteine 114. The Ca(2+) site is built by tyrosine 75, glycine 77, and tyrosine 80. Histidine 99 is a catalytic residue. Ca(2+) is bound at residue aspartate 100.

It belongs to the phospholipase A2 family. Requires Ca(2+) as cofactor.

The protein localises to the secreted. It carries out the reaction a 1,2-diacyl-sn-glycero-3-phosphocholine + H2O = a 1-acyl-sn-glycero-3-phosphocholine + a fatty acid + H(+). With respect to regulation, inhibited by EGTA. PA2 catalyzes the calcium-dependent hydrolysis of the 2-acyl groups in 3-sn-phosphoglycerides. Releases lysophospholipids (LPLs) and free fatty acids (FFAs) from membrane phospholipids in response to hormones and other external stimuli. The protein is Phospholipase A2 homolog 3 (PLA2-III) of Oryza sativa subsp. japonica (Rice).